Here is a 572-residue protein sequence, read N- to C-terminus: Arginine--tRNA ligase (572 aa).

A 'HIGH' region motif is present at residues 122 to 132; it reads PNLAKEMHVGH.

It belongs to the class-I aminoacyl-tRNA synthetase family. Monomer.

The protein resides in the cytoplasm. It carries out the reaction tRNA(Arg) + L-arginine + ATP = L-arginyl-tRNA(Arg) + AMP + diphosphate. The sequence is that of Arginine--tRNA ligase from Neisseria meningitidis serogroup C / serotype 2a (strain ATCC 700532 / DSM 15464 / FAM18).